The following is a 23-amino-acid chain: Septenin 2 (23 aa).

In terms of tissue distribution, expressed in skin glands.

Its subcellular location is the secreted. In terms of biological role, may act as an antimicrobial peptide. This Osteopilus septentrionalis (Cuban treefrog) protein is Septenin 2.